Reading from the N-terminus, the 517-residue chain is Serine O-succinyltransferase (517 aa).

The transit peptide at 1–46 (MSPLNGVARSFPRPFQAVTRRPFRVVQPAIACPSNSRSFNHSRSLR) directs the protein to the mitochondrion. Over residues 36 to 64 (SRSFNHSRSLRSTGSQSPAPSPRDSSNPA) the composition is skewed to polar residues. A disordered region spans residues 36-66 (SRSFNHSRSLRSTGSQSPAPSPRDSSNPALS). The AB hydrolase-1 domain maps to 134 to 386 (NVILLHTGLS…LTQQLATKKQ (253 aa)). Positions 141-144 (GLSA) are important for substrate specificity. Serine 238 serves as the catalytic Nucleophile. Residue arginine 307 coordinates substrate. Residues 413–436 (QPYQEQPSASTSAEQSASASETGS) form a disordered region. Residues 416–436 (QEQPSASTSAEQSASASETGS) are compositionally biased toward low complexity. Active-site residues include aspartate 461 and histidine 498. Aspartate 499 serves as a coordination point for substrate.

It belongs to the AB hydrolase superfamily. MetX family.

It localises to the mitochondrion. The enzyme catalyses succinyl-CoA + L-serine = O-succinyl-L-serine + CoA. It functions in the pathway amino-acid biosynthesis; L-cysteine biosynthesis; L-cysteine from L-serine: step 1/2. Functionally, transfers a succinyl group from succinyl-CoA to L-serine, forming succinyl-L-serine. Also has weak serine acetyl transferase activity and homoserine succinyl transferase activity. The sequence is that of Serine O-succinyltransferase from Emericella nidulans (strain FGSC A4 / ATCC 38163 / CBS 112.46 / NRRL 194 / M139) (Aspergillus nidulans).